We begin with the raw amino-acid sequence, 382 residues long: POU domain, class 3, transcription factor 2-A (382 aa).

Disordered regions lie at residues 69–136 (PWAT…SSNG), 150–206 (GMIN…TPTS), and 348–382 (EKRM…TSVQ). Residues 122–136 (STGSTHLSSMASSNG) are compositionally biased toward polar residues. Over residues 165–178 (LRDSHDDHHGDHGH) the composition is skewed to basic and acidic residues. Low complexity predominate over residues 179–194 (QQVSQAQQQHSQLQGG). A POU-specific domain is found at 201–275 (EDTPTSDDLE…LLNKWLEEAD (75 aa)). Positions 293-352 (KRKKRTSIEVSVKGALESHFLKCPKPSAPEITSLADSLQLEKEVVRVWFCNRRQKEKRMT) form a DNA-binding region, homeobox.

This sequence belongs to the POU transcription factor family. Class-3 subfamily. As to expression, expressed in the developing brain and spinal cord. Also found in a restricted region of the auditory vesicle during development. In the adult, expression is restricted to the brain.

It localises to the nucleus. Functionally, transcription factor that may be implicated in patterning of the central nervous system during early development. This chain is POU domain, class 3, transcription factor 2-A (pou3f2-a), found in Xenopus laevis (African clawed frog).